Reading from the N-terminus, the 557-residue chain is Inositol-3-phosphate synthase 1 (557 aa).

The NAD(+) site is built by Gly67, Gly68, Asn69, Asn70, Asp141, Ser177, Val178, Gln188, Arg191, Thr228, Ala229, Asn230, Thr231, Gly278, Ser279, Asp303, Ser306, Asn337, Asn338, Asp339, and Lys352. Position 279 is a phosphoserine (Ser279). At Ser357 the chain carries Phosphoserine. 4 residues coordinate NAD(+): Gly390, Asp391, Asp419, and Ser420. The disordered stretch occupies residues 512 to 557; the sequence is GPGIKPGEVVATSPLPCKKEPTPATNGCTGDANGHPQAPTPKLSTA. Position 524 is a phosphoserine (Ser524).

This sequence belongs to the myo-inositol 1-phosphate synthase family. It depends on NAD(+) as a cofactor. In testis, it is expressed in Sertoli cells. Highly expressed in 2 types of germ cells, pachytene spermatocytes and round spermatids.

It localises to the cytoplasm. The enzyme catalyses D-glucose 6-phosphate = 1D-myo-inositol 3-phosphate. The protein operates within polyol metabolism; myo-inositol biosynthesis; myo-inositol from D-glucose 6-phosphate: step 1/2. In terms of biological role, key enzyme in myo-inositol biosynthesis pathway that catalyzes the conversion of glucose 6-phosphate to 1-myo-inositol 1-phosphate in a NAD-dependent manner. Rate-limiting enzyme in the synthesis of all inositol-containing compounds. The sequence is that of Inositol-3-phosphate synthase 1 (Isyna1) from Mus musculus (Mouse).